Consider the following 846-residue polypeptide: DNA mismatch repair protein MutS (846 aa).

610-617 contributes to the ATP binding site; that stretch reads GPNMGGKS.

The protein belongs to the DNA mismatch repair MutS family.

In terms of biological role, this protein is involved in the repair of mismatches in DNA. It is possible that it carries out the mismatch recognition step. This protein has a weak ATPase activity. The polypeptide is DNA mismatch repair protein MutS (Legionella pneumophila (strain Corby)).